The chain runs to 60 residues: Mastoparan-VB2 (60 aa).

A signal peptide spans 1-27; it reads MKNTILLLFTAFIFLMGFFGMSADALA. 4 AXPX repeats span residues 27–30, 31–34, 35–38, and 41–44; these read ADPK, ADPL, AGPF, and ADPD. Positions 28 to 45 are excised as a propeptide; it reads DPKADPLAGPFPDADPDP. L59 is modified (leucine amide).

The protein belongs to the MCD family. Mastoparan subfamily. In terms of tissue distribution, expressed by the venom gland.

It localises to the secreted. It is found in the target cell membrane. Its function is as follows. Antimicrobial peptide. Shows activity against both Gram-positive and -negative bacteria, as well against fungi. Also promotes moderate mast cell degranulation. Does not show hemolytic activity on rabbit and human erythrocytes. Its mast cell degranulation activity may be related to the activation of G-protein coupled receptors in mast cells as well as interaction with other proteins located in cell endosomal membranes in the mast cells. This is Mastoparan-VB2 from Vespa bicolor (Black shield wasp).